Reading from the N-terminus, the 472-residue chain is Karilysin (472 aa).

The first 20 residues, 1 to 20 (MKRFILLFFLSTIAIFKVYS), serve as a signal peptide directing secretion. The propeptide at 21 to 34 (QRLYDNGPLTGDNN) is activation peptide. Residues histidine 102, aspartate 104, histidine 117, histidine 133, and histidine 155 each coordinate Zn(2+). Glutamate 156 (proton donor/acceptor) is an active-site residue. Residues histidine 159 and histidine 165 each coordinate Zn(2+). Residues 196–386 (YGYPFSISGP…AVSCSRTISP (191 aa)) constitute a propeptide, removed in short form. Residues 387 to 472 (FTLSPNPATD…QTYTQKLIKK (86 aa)) constitute a propeptide, removed in long form.

Belongs to the peptidase M10A family. Requires Zn(2+) as cofactor. Post-translationally, processes itself into the mature 18-kDa enzyme (Kly18) through sequential autoproteolytic cleavage at both the N- and C-termini. However, the maturation intermediate Kly38 is found to be more active than Kly18 and the rate for its processing is slow, which raises the question as to whether Kly38 is a physiologically relevant entity.

It is found in the secreted. Autoprocessing and proteolytic activity are completely inhibited by EDTA and 1,10-phenanthroline in vitro. Proteolytic activity is 3-fold enhanced by Ca(2+) due to stabilization of the protein structure but inhibited by an excess of Zn(2+). Inhibitory studies of karilysin identified several phage display-selected peptides with apparent inhibition constants (Ki) in the micromolar range, among which is the tetrapeptide SWFP (Ki=10.7 uM). Metalloprotease able to cleave casein, gelatin, elastin, fibrinogen and fibronectin. Shows exclusive preference for hydrophobic residues, especially Leu, Tyr and Met, at the P1' position of substrates, and for Pro or Ala at P3. Can efficiently cleave the antimicrobial peptide LL-37 which is a component of the immune system, leading to a significant reduction of its bactericidal activity. Is also able to inhibit all pathways of the human complement system. The classical and lectin complement pathways are inhibited because of the efficient degradation of mannose-binding lectin, ficolin-2, ficolin-3, and C4 by karilysin, whereas inhibition of the terminal pathway is caused by cleavage of C5. Thus, karilysin appears to be a major virulence factor of T.forsythia that contributes to evasion of the human immune response and periodontal disease. Seems to act synergistically with gingipains from the periodontal pathogen P.gingivalis present at the same sites of infection. This Tannerella forsythia (strain ATCC 43037 / JCM 10827 / CCUG 21028 A / KCTC 5666 / FDC 338) (Bacteroides forsythus) protein is Karilysin (kly).